The sequence spans 442 residues: Glutamyl-tRNA(Gln) amidotransferase subunit A (442 aa).

Residues K50 and S125 each act as charge relay system in the active site. The Acyl-ester intermediate role is filled by S149.

It belongs to the amidase family. GatA subfamily. In terms of assembly, heterotrimer of A, B and C subunits.

It catalyses the reaction L-glutamyl-tRNA(Gln) + L-glutamine + ATP + H2O = L-glutaminyl-tRNA(Gln) + L-glutamate + ADP + phosphate + H(+). Functionally, allows the formation of correctly charged Gln-tRNA(Gln) through the transamidation of misacylated Glu-tRNA(Gln) in organisms which lack glutaminyl-tRNA synthetase. The reaction takes place in the presence of glutamine and ATP through an activated gamma-phospho-Glu-tRNA(Gln). The chain is Glutamyl-tRNA(Gln) amidotransferase subunit A from Nitratiruptor sp. (strain SB155-2).